The following is a 603-amino-acid chain: NADH-quinone oxidoreductase subunit C/D (603 aa).

Positions 1–193 are NADH dehydrogenase I subunit C; sequence MVNNMTDLTA…DPFTLTKQKE (193 aa). The NADH dehydrogenase I subunit D stretch occupies residues 217-603; that stretch reads DFMFLNLGPN…IDFVMSDVDR (387 aa).

The protein in the N-terminal section; belongs to the complex I 30 kDa subunit family. It in the C-terminal section; belongs to the complex I 49 kDa subunit family. In terms of assembly, NDH-1 is composed of 13 different subunits. Subunits NuoB, CD, E, F, and G constitute the peripheral sector of the complex.

The protein localises to the cell inner membrane. It catalyses the reaction a quinone + NADH + 5 H(+)(in) = a quinol + NAD(+) + 4 H(+)(out). NDH-1 shuttles electrons from NADH, via FMN and iron-sulfur (Fe-S) centers, to quinones in the respiratory chain. The immediate electron acceptor for the enzyme in this species is believed to be ubiquinone. Couples the redox reaction to proton translocation (for every two electrons transferred, four hydrogen ions are translocated across the cytoplasmic membrane), and thus conserves the redox energy in a proton gradient. The chain is NADH-quinone oxidoreductase subunit C/D from Cronobacter sakazakii (strain ATCC BAA-894) (Enterobacter sakazakii).